A 159-amino-acid polypeptide reads, in one-letter code: SsrA-binding protein (159 aa).

The segment at 133–159 (KKLHDKRETSKERDWNRQKNRLLKERG) is disordered. Positions 137-159 (DKRETSKERDWNRQKNRLLKERG) are enriched in basic and acidic residues.

Belongs to the SmpB family.

The protein resides in the cytoplasm. Required for rescue of stalled ribosomes mediated by trans-translation. Binds to transfer-messenger RNA (tmRNA), required for stable association of tmRNA with ribosomes. tmRNA and SmpB together mimic tRNA shape, replacing the anticodon stem-loop with SmpB. tmRNA is encoded by the ssrA gene; the 2 termini fold to resemble tRNA(Ala) and it encodes a 'tag peptide', a short internal open reading frame. During trans-translation Ala-aminoacylated tmRNA acts like a tRNA, entering the A-site of stalled ribosomes, displacing the stalled mRNA. The ribosome then switches to translate the ORF on the tmRNA; the nascent peptide is terminated with the 'tag peptide' encoded by the tmRNA and targeted for degradation. The ribosome is freed to recommence translation, which seems to be the essential function of trans-translation. The chain is SsrA-binding protein from Sinorhizobium medicae (strain WSM419) (Ensifer medicae).